A 181-amino-acid polypeptide reads, in one-letter code: MFKKFDEKENVSNCIQLKTSVIKGIKNQLIDQFPGIEQWLNQIMPKKDPVKIVRCHEHIEILTVNGELLFFRQREGPFYPTLRLLHKYPFILPHQQVDKGAIKFVLSGANIMCPGLTSPGAKLYPAAADTVVAIMAEGKQHALCVGVMKMSADDIEKINKGIGIENIHYLNDGLWHMKTYK.

One can recognise a PUA domain in the interval 92 to 171; the sequence is LPHQQVDKGA…IGIENIHYLN (80 aa).

The protein belongs to the MCTS1 family.

The protein localises to the cytoplasm. Its function is as follows. Plays a role as translation enhancer and involved in cell cycle regulation. This is Malignant T-cell-amplified sequence 1-A (mcts1-a) from Xenopus laevis (African clawed frog).